The primary structure comprises 191 residues: Thymidylate kinase (191 aa).

ATP is bound at residue 7 to 14 (GIDTAGKS).

The protein belongs to the thymidylate kinase family.

The catalysed reaction is dTMP + ATP = dTDP + ADP. Phosphorylation of dTMP to form dTDP in both de novo and salvage pathways of dTTP synthesis. The polypeptide is Thymidylate kinase (Sulfurimonas denitrificans (strain ATCC 33889 / DSM 1251) (Thiomicrospira denitrificans (strain ATCC 33889 / DSM 1251))).